Consider the following 355-residue polypeptide: Anthranilate phosphoribosyltransferase (355 aa).

Residues Gly85, Gly88–Asp89, Thr93, Asn95–Thr98, Lys113–Ser121, and Ser125 contribute to the 5-phospho-alpha-D-ribose 1-diphosphate site. Gly85 is a binding site for anthranilate. Residue Ser97 participates in Mg(2+) binding. Asn116 contributes to the anthranilate binding site. Arg171 is an anthranilate binding site. Mg(2+) contacts are provided by Asp229 and Glu230.

The protein belongs to the anthranilate phosphoribosyltransferase family. As to quaternary structure, homodimer. Mg(2+) is required as a cofactor.

The catalysed reaction is N-(5-phospho-beta-D-ribosyl)anthranilate + diphosphate = 5-phospho-alpha-D-ribose 1-diphosphate + anthranilate. The protein operates within amino-acid biosynthesis; L-tryptophan biosynthesis; L-tryptophan from chorismate: step 2/5. Catalyzes the transfer of the phosphoribosyl group of 5-phosphorylribose-1-pyrophosphate (PRPP) to anthranilate to yield N-(5'-phosphoribosyl)-anthranilate (PRA). This Acidothermus cellulolyticus (strain ATCC 43068 / DSM 8971 / 11B) protein is Anthranilate phosphoribosyltransferase.